A 480-amino-acid polypeptide reads, in one-letter code: Glutamate--tRNA ligase (480 aa).

A 'HIGH' region motif is present at residues 21–31 (PSPTGYLHVGG). Residues 122 to 146 (NTQEQNKQKPRYDRHCLGDHKHSPE) show a composition bias toward basic and acidic residues. A disordered region spans residues 122 to 149 (NTQEQNKQKPRYDRHCLGDHKHSPEQPH). A 'KMSKS' region motif is present at residues 248-252 (KLSKR). Position 251 (Lys251) interacts with ATP.

This sequence belongs to the class-I aminoacyl-tRNA synthetase family. Glutamate--tRNA ligase type 1 subfamily. In terms of assembly, monomer.

Its subcellular location is the cytoplasm. It carries out the reaction tRNA(Glu) + L-glutamate + ATP = L-glutamyl-tRNA(Glu) + AMP + diphosphate. Its function is as follows. Catalyzes the attachment of glutamate to tRNA(Glu) in a two-step reaction: glutamate is first activated by ATP to form Glu-AMP and then transferred to the acceptor end of tRNA(Glu). This is Glutamate--tRNA ligase from Pasteurella multocida (strain Pm70).